A 351-amino-acid polypeptide reads, in one-letter code: MTSSVDSRMADALLDDFLAFTLTGSAPSATDGACAAGAVRWQWLGDGLLALEPAAAEAADTARASVLVSAGVHGDETAPIELLSMLVRDLASGALPLACRLLVVLGNVPAMRAGERYLDDDLNRLFSGRHAQVPDSREAPRATQLEAAAAAFFAAAPAGAARWHIDMHTAIRASVFEQFALLPHTGMPPTRTMFEWLGDAQIAAVLLHTAKGNTYSHFTAEHCGALACTLELGKVRPFGQNDLTRFAPADRAVRKLVSGATGEADVPLPRVFTVIDQITKQSDALELFVAADVANFTAFARGTVLAQDGDYRYTVTHDEERIVFPNPSVKPGLRAGLLVIDTTRETVAALV.

Residues His73, Glu76, and His168 each coordinate Zn(2+). Glu231 is an active-site residue.

It belongs to the AspA/AstE family. Succinylglutamate desuccinylase subfamily. Zn(2+) is required as a cofactor.

The enzyme catalyses N-succinyl-L-glutamate + H2O = L-glutamate + succinate. It functions in the pathway amino-acid degradation; L-arginine degradation via AST pathway; L-glutamate and succinate from L-arginine: step 5/5. Its function is as follows. Transforms N(2)-succinylglutamate into succinate and glutamate. The chain is Succinylglutamate desuccinylase from Burkholderia lata (strain ATCC 17760 / DSM 23089 / LMG 22485 / NCIMB 9086 / R18194 / 383).